A 339-amino-acid chain; its full sequence is Cyclin-D1-1 (339 aa).

The protein belongs to the cyclin family. Cyclin D subfamily. In terms of assembly, interacts with CDKA-1 and KRP6/ICK4. As to expression, expressed in roots, leaves and flowers.

Its function is as follows. May activate cell cycle in the root apical meristem (RAM) and promote embryonic root (radicle) protrusion. The sequence is that of Cyclin-D1-1 (CYCD1-1) from Arabidopsis thaliana (Mouse-ear cress).